The chain runs to 350 residues: DNA repair protein RAD51 homolog 2 (350 aa).

Residues 1 to 75 (MSSKKLRRVG…TAYELKTRRS (75 aa)) form an interaction with RAD51C region. 108–115 (GPPGCGKT) lines the ATP pocket.

The protein belongs to the RecA family. RAD51 subfamily. As to quaternary structure, part of the BCDX2 complex consisting of RAD51B, RAD51C, RAD51D and XRCC2; the complex has a ring-like structure arranged into a flat disc around a central channel. The BCDX2 subcomplex RAD51B:RAD51C interacts with RAD51. Interacts with SWSAP1; involved in homologous recombination repair. Interacts with HELQ. In terms of processing, phosphorylated on tyrosine residues by BCR-ABL. Expressed in a wide range of tissues.

The protein localises to the nucleus. Functionally, involved in the homologous recombination repair (HRR) pathway of double-stranded DNA breaks arising during DNA replication or induced by DNA-damaging agents. May promote the assembly of presynaptic RAD51 nucleoprotein filaments. Binds single-stranded DNA and double-stranded DNA and has DNA-dependent ATPase activity. Part of the RAD51 paralog protein complex BCDX2 which acts in the BRCA1-BRCA2-dependent HR pathway. Upon DNA damage, BCDX2 acts downstream of BRCA2 recruitment and upstream of RAD51 recruitment. BCDX2 binds predominantly to the intersection of the four duplex arms of the Holliday junction and to junction of replication forks. The BCDX2 complex was originally reported to bind single-stranded DNA, single-stranded gaps in duplex DNA and specifically to nicks in duplex DNA. The BCDX2 subcomplex RAD51B:RAD51C exhibits single-stranded DNA-dependent ATPase activity suggesting an involvement in early stages of the HR pathway. This chain is DNA repair protein RAD51 homolog 2 (Rad51b), found in Mus musculus (Mouse).